A 139-amino-acid polypeptide reads, in one-letter code: S-adenosylmethionine decarboxylase proenzyme (139 aa).

Residue Ser63 is the Schiff-base intermediate with substrate; via pyruvic acid of the active site. Ser63 is subject to Pyruvic acid (Ser); by autocatalysis. His68 (proton acceptor; for processing activity) is an active-site residue. Residue Cys83 is the Proton donor; for catalytic activity of the active site.

The protein belongs to the prokaryotic AdoMetDC family. Type 1 subfamily. In terms of assembly, heterotetramer of two alpha and two beta chains arranged as a dimer of alpha/beta heterodimers. The cofactor is pyruvate. Post-translationally, is synthesized initially as an inactive proenzyme. Formation of the active enzyme involves a self-maturation process in which the active site pyruvoyl group is generated from an internal serine residue via an autocatalytic post-translational modification. Two non-identical subunits are generated from the proenzyme in this reaction, and the pyruvate is formed at the N-terminus of the alpha chain, which is derived from the carboxyl end of the proenzyme. The post-translation cleavage follows an unusual pathway, termed non-hydrolytic serinolysis, in which the side chain hydroxyl group of the serine supplies its oxygen atom to form the C-terminus of the beta chain, while the remainder of the serine residue undergoes an oxidative deamination to produce ammonia and the pyruvoyl group blocking the N-terminus of the alpha chain.

It catalyses the reaction S-adenosyl-L-methionine + H(+) = S-adenosyl 3-(methylsulfanyl)propylamine + CO2. Its pathway is amine and polyamine biosynthesis; S-adenosylmethioninamine biosynthesis; S-adenosylmethioninamine from S-adenosyl-L-methionine: step 1/1. Functionally, catalyzes the decarboxylation of S-adenosylmethionine to S-adenosylmethioninamine (dcAdoMet), the propylamine donor required for the synthesis of the polyamines spermine and spermidine from the diamine putrescine. In Pyrococcus abyssi (strain GE5 / Orsay), this protein is S-adenosylmethionine decarboxylase proenzyme.